The chain runs to 659 residues: MIDLIFPDGSARQYADGSTGRDVAASISKSLEKKALLIKLDGKLLDLDRPLTPDLLGGGNRFEIITRDSPDALEVIRHDTAHVLAEAVQELFPGTQVTIGPNVEDGFYYDFARDEPFSLDDLPKIEERMRQIVDRDEKIRREEVDRDAAIADFEAMGESYKAQIIRDLPASDTITVYHQGEKWKDLCRGPHLPSTKAVGKAFKLTKLAGAYWRGDQNNAQLQRIYGTSWATEADLEAHLKRIEEAERRDHRKLGKTMDLFHIQEEGKGMVFWHPKGWTLYLALEAYMRRRLDAAGYREVKTPQILDKSLWERSGHAEKFGHAMFMCESAEGEVLAVKPMNCPGHIQIFNVGQKSYRELPLRMAEFGACHRYEPSGAMHGIMRVRAFTQDDAHIFCREEQVTEESARFIELLRSVYSDLGMHLADTKFSTRPELRAGEDAVWDKAEAALSAAAEAAGETLVLQEGEGAFYGPKLEFSLKDAIGRVWQCGTLQLDFVLPERLDAEYVAEDGSKKRPVMLHRAILGSFERFIGILLENYAGHLPLWLAPVQVVVATITSDADDYAQRVAERLTSMGIRAEVDFRNEKINYKIREHSLAKVPVIAVVGRKEAENGEVALRRLGGEGQKVLSLEDAVRALTEEATPPDLARDRAVAAPAELAQA.

The region spanning 1 to 61 (MIDLIFPDGS…TPDLLGGGNR (61 aa)) is the TGS domain. A catalytic region spans residues 249-541 (DHRKLGKTMD…LLENYAGHLP (293 aa)). Residues Cys-341, His-392, and His-518 each contribute to the Zn(2+) site. The segment at 637–659 (EEATPPDLARDRAVAAPAELAQA) is disordered.

It belongs to the class-II aminoacyl-tRNA synthetase family. As to quaternary structure, homodimer. Zn(2+) serves as cofactor.

The protein localises to the cytoplasm. It carries out the reaction tRNA(Thr) + L-threonine + ATP = L-threonyl-tRNA(Thr) + AMP + diphosphate + H(+). In terms of biological role, catalyzes the attachment of threonine to tRNA(Thr) in a two-step reaction: L-threonine is first activated by ATP to form Thr-AMP and then transferred to the acceptor end of tRNA(Thr). Also edits incorrectly charged L-seryl-tRNA(Thr). The polypeptide is Threonine--tRNA ligase (Caulobacter sp. (strain K31)).